The primary structure comprises 276 residues: MNGRTQLASWARIAMDRGDHHHLQQQHQFLMPPPAPVVPPQLCMPAMMADEQYMDLGGGGAAAAPGRGGAGERKRRFTEEQIRSLESMFHAHHAKLEPREKAELARELGLQPRQVAIWFQNKRARWRSKQLEHDYAALRSKYDALHSRVESLKQEKLALTVQLHELRERLREREERSGNGGAATTAASSSSCNGSGSEEVDDDDDKRNAAAGCLDLEPPESCVLGGATCATPADVSVESDQCDDQLDYDEGLFPESFCATPELWEPWPLVEWNAVA.

The segment at residues 70–130 (AGERKRRFTE…NKRARWRSKQ (61 aa)) is a DNA-binding region (homeobox). The interval 129–173 (KQLEHDYAALRSKYDALHSRVESLKQEKLALTVQLHELRERLRER) is leucine-zipper. The segment at 170 to 212 (LREREERSGNGGAATTAASSSSCNGSGSEEVDDDDDKRNAAAG) is disordered. The segment covering 182 to 197 (AATTAASSSSCNGSGS) has biased composition (low complexity).

This sequence belongs to the HD-ZIP homeobox family. Class I subfamily. In terms of tissue distribution, expressed in seedlings, roots, stems, leaf sheaths and blades and panicles.

It localises to the nucleus. In terms of biological role, probable transcription factor. The protein is Homeobox-leucine zipper protein HOX22 (HOX22) of Oryza sativa subsp. japonica (Rice).